The following is a 702-amino-acid chain: Polyribonucleotide nucleotidyltransferase 3 (702 aa).

Positions 483 and 489 each coordinate Mg(2+). Residues 550–609 (PKVTQIKVHPDKVREVIGAGGKVINKIIDETGCKITIENDGTIYVAAPDQESSRRAVEMI) form the KH domain. The S1 motif domain occupies 619 to 687 (GEVYTGKVIK…PQGKIGLSRK (69 aa)).

It belongs to the polyribonucleotide nucleotidyltransferase family. It depends on Mg(2+) as a cofactor.

It localises to the cytoplasm. The catalysed reaction is RNA(n+1) + phosphate = RNA(n) + a ribonucleoside 5'-diphosphate. In terms of biological role, involved in mRNA degradation. Catalyzes the phosphorolysis of single-stranded polyribonucleotides processively in the 3'- to 5'-direction. The polypeptide is Polyribonucleotide nucleotidyltransferase 3 (Alkaliphilus metalliredigens (strain QYMF)).